A 52-amino-acid polypeptide reads, in one-letter code: Rubredoxin (52 aa).

The Rubredoxin-like domain maps to 1–52 (MEKWQCTVCGYIYDPEVGDPTQNIPPGTKFEDLPDDWVCPDCGVGKDQFEKI). Fe cation is bound by residues Cys6, Cys9, Cys39, and Cys42.

Belongs to the rubredoxin family. It depends on Fe(3+) as a cofactor.

Its function is as follows. Rubredoxin is a small nonheme, iron protein lacking acid-labile sulfide. Its single Fe, chelated to 4 Cys, functions as an electron acceptor and may also stabilize the conformation of the molecule. The polypeptide is Rubredoxin (Thermoanaerobacterium thermosaccharolyticum (strain ATCC 7956 / DSM 571 / NCIMB 9385 / NCA 3814 / NCTC 13789 / WDCM 00135 / 2032) (Clostridium thermosaccharolyticum)).